The following is a 327-amino-acid chain: Ferrochelatase (327 aa).

Fe cation contacts are provided by H187 and E265.

This sequence belongs to the ferrochelatase family.

The protein resides in the cytoplasm. It catalyses the reaction heme b + 2 H(+) = protoporphyrin IX + Fe(2+). It participates in porphyrin-containing compound metabolism; protoheme biosynthesis; protoheme from protoporphyrin-IX: step 1/1. In terms of biological role, catalyzes the ferrous insertion into protoporphyrin IX. This is Ferrochelatase from Chlamydia pneumoniae (Chlamydophila pneumoniae).